The primary structure comprises 890 residues: Translation initiation factor IF-2 (890 aa).

The tract at residues 45 to 304 (LIDHLNQKNS…LQQGFQKPAQ (260 aa)) is disordered. Residues 67-81 (STLNIPGTGGKSKSV) are compositionally biased toward polar residues. Residues 92-217 (VKRDPQEAER…RMAEENKWTD (126 aa)) are compositionally biased toward basic and acidic residues. Positions 252-266 (GRGRNAKAARPKKGN) are enriched in basic residues. Basic and acidic residues predominate over residues 267 to 280 (KHSESKADREEARA). The tr-type G domain occupies 389 to 558 (PRAPVVTIMG…LLQAEVLELK (170 aa)). A G1 region spans residues 398-405 (GHVDHGKT). 398-405 (GHVDHGKT) serves as a coordination point for GTP. The tract at residues 423 to 427 (GITQH) is G2. Residues 444 to 447 (DTPG) form a G3 region. GTP is bound by residues 444 to 448 (DTPGH) and 498 to 501 (NKID). A G4 region spans residues 498–501 (NKID). Residues 534–536 (SAK) form a G5 region. Residue Lys808 is modified to N6-acetyllysine.

It belongs to the TRAFAC class translation factor GTPase superfamily. Classic translation factor GTPase family. IF-2 subfamily.

It localises to the cytoplasm. Functionally, one of the essential components for the initiation of protein synthesis. Protects formylmethionyl-tRNA from spontaneous hydrolysis and promotes its binding to the 30S ribosomal subunits. Also involved in the hydrolysis of GTP during the formation of the 70S ribosomal complex. The chain is Translation initiation factor IF-2 from Escherichia fergusonii (strain ATCC 35469 / DSM 13698 / CCUG 18766 / IAM 14443 / JCM 21226 / LMG 7866 / NBRC 102419 / NCTC 12128 / CDC 0568-73).